The sequence spans 573 residues: Heat shock protein 60A (573 aa).

The transit peptide at 1–57 (MFRLPVSLARSSISRQLAMRGYAKDVRFGPEVRAMMLQGVDVLADAVAVTMGPKGRN) directs the protein to the mitochondrion.

This sequence belongs to the chaperonin (HSP60) family.

The protein localises to the mitochondrion matrix. In terms of biological role, prevents misfolding and promotes the refolding and proper assembly of unfolded polypeptides generated under stress conditions. This chain is Heat shock protein 60A, found in Drosophila melanogaster (Fruit fly).